The sequence spans 367 residues: MAVANPTTEQAILSEMRKQNRDRRALRFWLGFVLLALFCLVLVGGATRLTNSGLSITEWKPIHGVIPPLSAAEWEEEFRLYQRIPEFQQLNSSMTVDEFKGIFWWEWAHRLIARAIGVIFALPLIYFWLTGRIEKRLRWPLVGILALGGLQGGIGWWMVSSGLSVRTDVSQYRLATHLVMACLIFAGCMWIMRGLSRHSDDPPPTRSSRGFAAAIAIFSLFQIYLGALVAGLDAGFSYNTWPLMDGAVIPSDLLIQQPFWINAFENPKTVQFIHRIGAYTLFALTLINMVIALRAAPWTTHARRAILLFVLVTLQAAIGIATLLMQVPLHWGLLHQAGALVVFGFAVANWRGFYGEYPHGTMIAERD.

The next 5 helical transmembrane spans lie at 25–45 (ALRFWLGFVLLALFCLVLVGG), 111–131 (LIARAIGVIFALPLIYFWLTG), 139–159 (WPLVGILALGGLQGGIGWWMV), 174–194 (LATHLVMACLIFAGCMWIMRG), and 210–230 (GFAAAIAIFSLFQIYLGALVA). His-274 lines the heme pocket. 3 helical membrane-spanning segments follow: residues 276–296 (IGAYTLFALTLINMVIALRAA), 305–325 (AILLFVLVTLQAAIGIATLLM), and 327–347 (VPLHWGLLHQAGALVVFGFAV). Position 335 (His-335) interacts with heme.

This sequence belongs to the COX15/CtaA family. Type 2 subfamily. In terms of assembly, interacts with CtaB. Requires heme b as cofactor.

Its subcellular location is the cell membrane. The enzyme catalyses Fe(II)-heme o + 2 A + H2O = Fe(II)-heme a + 2 AH2. The protein operates within porphyrin-containing compound metabolism; heme A biosynthesis; heme A from heme O: step 1/1. Functionally, catalyzes the conversion of heme O to heme A by two successive hydroxylations of the methyl group at C8. The first hydroxylation forms heme I, the second hydroxylation results in an unstable dihydroxymethyl group, which spontaneously dehydrates, resulting in the formyl group of heme A. The protein is Heme A synthase of Rhizobium johnstonii (strain DSM 114642 / LMG 32736 / 3841) (Rhizobium leguminosarum bv. viciae).